A 352-amino-acid chain; its full sequence is Zinc transporter 1 (352 aa).

An N-terminal signal peptide occupies residues 1–29; the sequence is MARTMTMRVSSLLVAVVLLAALSFQACSG. The Extracellular portion of the chain corresponds to 30–56; that stretch reads HGGINDGDGQVDAPATPASSSGVRSKG. Residues 57 to 77 traverse the membrane as a helical segment; it reads LIAVKVWCLVILLVFTFAGGV. Topologically, residues 78–87 are cytoplasmic; it reads SPYFYRWNES. A helical membrane pass occupies residues 88-108; that stretch reads FLLLGTQFAAGVFLGTALMHF. Over 109–127 the chain is Extracellular; it reads LADSTSTFKGLTTNQYPFS. A helical membrane pass occupies residues 128–148; that stretch reads FMLTCVGFLLTMLSDLVIAAV. The Cytoplasmic segment spans residues 149-200; it reads ARRSAAAGVSDNQVSEQQQRQQAEGAVMSRKEEEAAAVAHPAMLVRTSSFED. Residues 201-221 traverse the membrane as a helical segment; the sequence is AVLLIVALCFHSVFEGIAIGV. Residues 222 to 230 are Extracellular-facing; the sequence is SASKSEAWR. A helical membrane pass occupies residues 231–251; it reads NLWTIGLHKIFAAVAMGIALL. At 252–262 the chain is on the cytoplasmic side; the sequence is RMIPKRPFLMT. A helical membrane pass occupies residues 263–283; it reads VVYSLAFAVSSPVGVGIGIAI. At 284–296 the chain is on the extracellular side; that stretch reads DATSQGRAADWTY. Residues 297–317 form a helical membrane-spanning segment; that stretch reads AISMGLATGVFIYVAINHLIA. Residues 318 to 330 lie on the Cytoplasmic side of the membrane; the sequence is KGYRPHHPTAADK. Residues 331–351 form a helical membrane-spanning segment; the sequence is PLFKFLAVLLGVAVMAVVMIW. A topological domain (extracellular) is located at residue Asp352.

Belongs to the ZIP transporter (TC 2.A.5) family. As to expression, expressed in vascular bundles of roots and leaves.

It localises to the cell membrane. Its function is as follows. Zinc transporter that may mediate zinc uptake from the rhizosphere. May also transport other divalent cations. In Oryza sativa subsp. japonica (Rice), this protein is Zinc transporter 1 (ZIP1).